The chain runs to 35 residues: Tamulustoxin-2 (35 aa).

Intrachain disulfides connect Cys-2–Cys-22, Cys-7–Cys-31, and Cys-11–Cys-33.

The protein belongs to the short scorpion toxin superfamily. Potassium channel inhibitor family. As to expression, expressed by the venom gland.

The protein localises to the secreted. Its function is as follows. Blocks Kv1.6/KCNA6 potassium channels. This Hottentotta tamulus (Eastern Indian scorpion) protein is Tamulustoxin-2.